A 592-amino-acid polypeptide reads, in one-letter code: Arginine--tRNA ligase (592 aa).

A 'HIGH' region motif is present at residues 139–149 (ANPNGPLHIGH).

Belongs to the class-I aminoacyl-tRNA synthetase family.

The protein localises to the cytoplasm. The enzyme catalyses tRNA(Arg) + L-arginine + ATP = L-arginyl-tRNA(Arg) + AMP + diphosphate. This chain is Arginine--tRNA ligase, found in Methanopyrus kandleri (strain AV19 / DSM 6324 / JCM 9639 / NBRC 100938).